The primary structure comprises 656 residues: Protein teflon (656 aa).

A C2H2-type 1 zinc finger spans residues 33–56 (LYCHFCRDLFTQLPEFLRHLQSNH). The interval 80–131 (DKAHEDAQSAGHNSSSGDSRSLMNSEDSRAIDGSEENSDNSPVKPEQIGKQN) is disordered. The segment covering 89–104 (AGHNSSSGDSRSLMNS) has biased composition (polar residues). 2 consecutive C2H2-type zinc fingers follow at residues 606–628 (YFCK…LISH) and 632–655 (FQCT…RNAH).

This sequence belongs to the Teflon family.

The protein resides in the nucleus. Its subcellular location is the chromosome. Functionally, specifically required in males for proper segregation of autosomal bivalents at meiosis I. Expression is required in the male germ line prior to spermatocyte stage S4. May have a role as a bridging molecule maintaining adhesion to hold autosome bivalents together via heterochromatic connections. The sequence is that of Protein teflon from Drosophila sechellia (Fruit fly).